The sequence spans 35 residues: TAIGNCNPFTCDKECKTKGNKRGYCENYNCECSKW.

3 disulfides stabilise this stretch: C6/C25, C11/C30, and C15/C32.

Belongs to the short scorpion toxin superfamily. Potassium channel inhibitor family. Alpha-KTx 21 subfamily. As to expression, expressed by the venom gland.

The protein resides in the secreted. Functionally, toxin that blocks voltage-gated potassium channels (Kv). This chain is Potassium channel toxin, found in Tityus metuendus (Scorpion).